Here is an 86-residue protein sequence, read N- to C-terminus: NAD(P)H-quinone oxidoreductase subunit O (86 aa).

It belongs to the complex I NdhO subunit family. NDH-1 can be composed of about 15 different subunits; different subcomplexes with different compositions have been identified which probably have different functions.

Its subcellular location is the cellular thylakoid membrane. The enzyme catalyses a plastoquinone + NADH + (n+1) H(+)(in) = a plastoquinol + NAD(+) + n H(+)(out). It carries out the reaction a plastoquinone + NADPH + (n+1) H(+)(in) = a plastoquinol + NADP(+) + n H(+)(out). NDH-1 shuttles electrons from an unknown electron donor, via FMN and iron-sulfur (Fe-S) centers, to quinones in the respiratory and/or the photosynthetic chain. The immediate electron acceptor for the enzyme in this species is believed to be plastoquinone. Couples the redox reaction to proton translocation, and thus conserves the redox energy in a proton gradient. Cyanobacterial NDH-1 also plays a role in inorganic carbon-concentration. This chain is NAD(P)H-quinone oxidoreductase subunit O, found in Prochlorococcus marinus (strain SARG / CCMP1375 / SS120).